Reading from the N-terminus, the 74-residue chain is Anionic peptide clone 8 (74 aa).

An N-terminal signal peptide occupies residues 1-24 (MVSKSLIVLLLVSVLVSTFFTTEA).

This sequence belongs to the non-disulfide-bridged peptide (NDBP) superfamily. Long chain multifunctional peptide (group 2) family. In terms of tissue distribution, expressed by the venom gland.

It localises to the secreted. Its function is as follows. May be an antimicrobial peptide. The protein is Anionic peptide clone 8 of Tityus costatus (Brazilian scorpion).